The sequence spans 244 residues: Short-chain dehydrogenase/reductase family member NovK (244 aa).

Residues 9-12 (GGGE), 59-60 (EL), and 154-158 (RPVLD) each bind NADP(+).

The protein belongs to the short-chain dehydrogenases/reductases (SDR) family. Heterotetramer; the NovJ(2)K(2) heterotetramer is composed of subunits of 2 NovJ and 2 subunits of NovK.

The protein operates within antibiotic biosynthesis; novobiocin biosynthesis. Functionally, non-catalytic subunit of the NovJ(2)K(2) heterotetramer that catalyzes the NADPH-dependent reduction of the tyrosyl moiety of L-beta-OH-Tyr-S-NovH intermediate to yield the tethered beta-ketotyrosyl-S-NovH in the novobiocin biosynthesis pathway. Novobiocin is an aminocoumarin family antibiotic that targets bacterial DNA gyrases. In Streptomyces niveus (Streptomyces spheroides), this protein is Short-chain dehydrogenase/reductase family member NovK (novK).